The sequence spans 273 residues: Alkaline ceramidase 1 (273 aa).

At 1-36 (MHVPGTRAKMSSIFAYQSSEVDWCESNFQHSELVAE) the chain is on the lumenal side. Ca(2+)-binding residues include D22, W23, E25, N27, and E36. The helical transmembrane segment at 37–57 (FYNTFSNVFFLIFGPLMMFLM) threads the bilayer. Topologically, residues 58 to 72 (HPYAQKRTRCFYGVS) are cytoplasmic. 2 consecutive transmembrane segments (helical) span residues 73–93 (VLFM…SFLG) and 94–114 (QLLD…VWLP). A Zn(2+)-binding site is contributed by H86. Residues 115–126 (RCYFPKFVKGNR) are Cytoplasmic-facing. The helical transmembrane segment at 127–147 (FYFSCLVTITTIISTFLTFVK) threads the bilayer. Over 148–149 (PT) the chain is Lumenal. Residues 150–167 (VNAYALNSIAIHILYIVR) traverse the membrane as a helical segment. Residues 168 to 177 (TEYKKIRDDD) are Cytoplasmic-facing. The chain crosses the membrane as a helical span at residues 178–198 (LRHLIAVSVVLWAAALTSWIS). Topologically, residues 199–215 (DRVLCSFWQRIHFYYLH) are lumenal. H215 and H219 together coordinate Zn(2+). The chain crosses the membrane as a helical span at residues 216–236 (SIWHVLISITFPYGIVTMALV). Topologically, residues 237–273 (DAKYEMPDKTLKVHYWPRDSWVIGLPYVEIQENDKNC) are cytoplasmic.

This sequence belongs to the alkaline ceramidase family. Requires Zn(2+) as cofactor. Highly expressed in skin. Weakly or not expressed in other tissues. Expressed by granular layer of interfollicular epidermis, sebaceous glands and infundibulum.

It localises to the endoplasmic reticulum membrane. The catalysed reaction is an N-acylsphing-4-enine + H2O = sphing-4-enine + a fatty acid. The enzyme catalyses N-tetracosanoyl-sphing-4-enine + H2O = tetracosanoate + sphing-4-enine. It carries out the reaction an N-acylsphinganine + H2O = sphinganine + a fatty acid. It catalyses the reaction N-(9Z-octadecenoyl)-sphing-4-enine + H2O = sphing-4-enine + (9Z)-octadecenoate. The catalysed reaction is N-(15Z-tetracosenoyl)-sphing-4-enine + H2O = (15Z)-tetracosenoate + sphing-4-enine. Its pathway is lipid metabolism; sphingolipid metabolism. With respect to regulation, inhibited by sphingosine. Inhibited by Mn(2+), Zn(2+), and Cu(2+) in a dose-dependent manner. Slightly activated by Ca(2+) in a dose-dependent manner. In terms of biological role, endoplasmic reticulum ceramidase that catalyzes the hydrolysis of ceramides into sphingosine and free fatty acids at alkaline pH. Ceramides, sphingosine, and its phosphorylated form sphingosine-1-phosphate are bioactive lipids that mediate cellular signaling pathways regulating several biological processes including cell proliferation, apoptosis and differentiation. Exhibits a strong substrate specificity towards the natural stereoisomer of ceramides with D-erythro-sphingosine as a backbone and has a higher activity towards very long-chain unsaturated fatty acids like the C24:1-ceramide. May also hydrolyze dihydroceramides to produce dihydrosphingosine. ACER1 is a skin-specific ceramidase that regulates the levels of ceramides, sphingosine and sphingosine-1-phosphate in the epidermis, mediates the calcium-induced differentiation of epidermal keratinocytes and more generally plays an important role in skin homeostasis. The sequence is that of Alkaline ceramidase 1 from Mus musculus (Mouse).